The chain runs to 271 residues: Formamidopyrimidine-DNA glycosylase (271 aa).

The active-site Schiff-base intermediate with DNA is the P2. Residue E3 is the Proton donor of the active site. The Proton donor; for beta-elimination activity role is filled by K57. H90, R109, and K151 together coordinate DNA. The FPG-type zinc-finger motif lies at 236-270 (HVYGRGGETCTQCGNLLSEIRLGQRTTVFCGICQT). The Proton donor; for delta-elimination activity role is filled by R260.

It belongs to the FPG family. Monomer. Zn(2+) is required as a cofactor.

It carries out the reaction Hydrolysis of DNA containing ring-opened 7-methylguanine residues, releasing 2,6-diamino-4-hydroxy-5-(N-methyl)formamidopyrimidine.. It catalyses the reaction 2'-deoxyribonucleotide-(2'-deoxyribose 5'-phosphate)-2'-deoxyribonucleotide-DNA = a 3'-end 2'-deoxyribonucleotide-(2,3-dehydro-2,3-deoxyribose 5'-phosphate)-DNA + a 5'-end 5'-phospho-2'-deoxyribonucleoside-DNA + H(+). Its function is as follows. Involved in base excision repair of DNA damaged by oxidation or by mutagenic agents. Acts as a DNA glycosylase that recognizes and removes damaged bases. Has a preference for oxidized purines, such as 7,8-dihydro-8-oxoguanine (8-oxoG). Has AP (apurinic/apyrimidinic) lyase activity and introduces nicks in the DNA strand. Cleaves the DNA backbone by beta-delta elimination to generate a single-strand break at the site of the removed base with both 3'- and 5'-phosphates. The protein is Formamidopyrimidine-DNA glycosylase of Shewanella sp. (strain MR-7).